The chain runs to 438 residues: Hydrogenobyrinate a,c-diamide synthase (438 aa).

Positions 247 to 438 (RIALAEDAAF…TFFHAIAKGG (192 aa)) constitute a GATase cobBQ-type domain. Catalysis depends on cysteine 329, which acts as the Nucleophile.

It belongs to the CobB/CbiA family. The cofactor is Mg(2+).

The enzyme catalyses hydrogenobyrinate + 2 L-glutamine + 2 ATP + 2 H2O = hydrogenobyrinate a,c-diamide + 2 L-glutamate + 2 ADP + 2 phosphate + 2 H(+). It participates in cofactor biosynthesis; adenosylcobalamin biosynthesis; cob(II)yrinate a,c-diamide from precorrin-2 (aerobic route): step 9/10. Its function is as follows. Catalyzes the ATP-dependent amidation of the two carboxylate groups at positions a and c of hydrogenobyrinate, using either L-glutamine or ammonia as the nitrogen source. The protein is Hydrogenobyrinate a,c-diamide synthase of Agrobacterium fabrum (strain C58 / ATCC 33970) (Agrobacterium tumefaciens (strain C58)).